The chain runs to 123 residues: Small ribosomal subunit protein uS13 (123 aa).

The disordered stretch occupies residues 97 to 123; the sequence is PVRGQRTHTNAKTRKGRSKLPVAAKKK.

The protein belongs to the universal ribosomal protein uS13 family. In terms of assembly, part of the 30S ribosomal subunit. Forms a loose heterodimer with protein S19. Forms two bridges to the 50S subunit in the 70S ribosome.

In terms of biological role, located at the top of the head of the 30S subunit, it contacts several helices of the 16S rRNA. In the 70S ribosome it contacts the 23S rRNA (bridge B1a) and protein L5 of the 50S subunit (bridge B1b), connecting the 2 subunits; these bridges are implicated in subunit movement. Contacts the tRNAs in the A and P-sites. This is Small ribosomal subunit protein uS13 from Ehrlichia chaffeensis (strain ATCC CRL-10679 / Arkansas).